Consider the following 452-residue polypeptide: Probable mannose-6-phosphate isomerase (452 aa).

Q141, H143, E168, and H295 together coordinate Zn(2+). R314 is a catalytic residue.

Belongs to the mannose-6-phosphate isomerase type 1 family. Zn(2+) serves as cofactor.

It localises to the cytoplasm. It catalyses the reaction D-mannose 6-phosphate = D-fructose 6-phosphate. Its pathway is nucleotide-sugar biosynthesis; GDP-alpha-D-mannose biosynthesis; alpha-D-mannose 1-phosphate from D-fructose 6-phosphate: step 1/2. Functionally, involved in the synthesis of the GDP-mannose and dolichol-phosphate-mannose required for a number of critical mannosyl transfer reactions. This chain is Probable mannose-6-phosphate isomerase (mpi), found in Dictyostelium discoideum (Social amoeba).